The sequence spans 388 residues: Chalcone synthase LF3 (388 aa).

The active site involves cysteine 164.

This sequence belongs to the thiolase-like superfamily. Chalcone/stilbene synthases family.

It carries out the reaction (E)-4-coumaroyl-CoA + 3 malonyl-CoA + 3 H(+) = 2',4,4',6'-tetrahydroxychalcone + 3 CO2 + 4 CoA. Its pathway is secondary metabolite biosynthesis; flavonoid biosynthesis. Functionally, the primary product of this enzyme is 4,2',4',6'-tetrahydroxychalcone (also termed naringenin-chalcone or chalcone) which can under specific conditions spontaneously isomerize into naringenin. In Ipomoea batatas (Sweet potato), this protein is Chalcone synthase LF3 (CHS-LF3).